Here is a 273-residue protein sequence, read N- to C-terminus: Thymidylate synthase (273 aa).

Arginine 31 contributes to the dUMP binding site. Histidine 61 contacts (6R)-5,10-methylene-5,6,7,8-tetrahydrofolate. DUMP is bound at residue 136-137 (RR). Cysteine 156 functions as the Nucleophile in the catalytic mechanism. DUMP is bound by residues 176–179 (RSAD), asparagine 187, and 217–219 (HIY). Aspartate 179 is a binding site for (6R)-5,10-methylene-5,6,7,8-tetrahydrofolate. Alanine 272 is a (6R)-5,10-methylene-5,6,7,8-tetrahydrofolate binding site.

Belongs to the thymidylate synthase family. Bacterial-type ThyA subfamily. As to quaternary structure, homodimer.

The protein localises to the cytoplasm. The catalysed reaction is dUMP + (6R)-5,10-methylene-5,6,7,8-tetrahydrofolate = 7,8-dihydrofolate + dTMP. It functions in the pathway pyrimidine metabolism; dTTP biosynthesis. Catalyzes the reductive methylation of 2'-deoxyuridine-5'-monophosphate (dUMP) to 2'-deoxythymidine-5'-monophosphate (dTMP) while utilizing 5,10-methylenetetrahydrofolate (mTHF) as the methyl donor and reductant in the reaction, yielding dihydrofolate (DHF) as a by-product. This enzymatic reaction provides an intracellular de novo source of dTMP, an essential precursor for DNA biosynthesis. The protein is Thymidylate synthase of Corynebacterium jeikeium (strain K411).